The chain runs to 391 residues: Probable malate dehydrogenase 1 (391 aa).

An NAD(+)-binding site is contributed by Gly-68–Ala-74. Positions 149 and 155 each coordinate substrate. Residues Asn-162, Gln-169, and Val-186–Asn-188 contribute to the NAD(+) site. Substrate-binding residues include Asn-188 and Arg-219. Residue His-244 is the Proton acceptor of the active site.

Belongs to the LDH/MDH superfamily. MDH type 2 family. Homodimer.

The catalysed reaction is (S)-malate + NAD(+) = oxaloacetate + NADH + H(+). Functionally, catalyzes the reversible oxidation of malate to oxaloacetate. In Dictyostelium discoideum (Social amoeba), this protein is Probable malate dehydrogenase 1 (mdhA).